The sequence spans 61 residues: MAKKSMIAKQKRTPKYNVQAYTRCERCGRPHSVLRKFKLCRICFRELAYKGQIPGVKKASW.

Zn(2+) is bound by residues Cys24, Cys27, Cys40, and Cys43.

This sequence belongs to the universal ribosomal protein uS14 family. Zinc-binding uS14 subfamily. In terms of assembly, part of the 30S ribosomal subunit. Contacts proteins S3 and S10. Requires Zn(2+) as cofactor.

Binds 16S rRNA, required for the assembly of 30S particles and may also be responsible for determining the conformation of the 16S rRNA at the A site. The protein is Small ribosomal subunit protein uS14B of Shouchella clausii (strain KSM-K16) (Alkalihalobacillus clausii).